A 377-amino-acid polypeptide reads, in one-letter code: DNA primase small subunit PriS (377 aa).

Residues Asp-99, Asp-101, and Asp-274 contribute to the active site.

The protein belongs to the eukaryotic-type primase small subunit family. In terms of assembly, heterodimer of a small subunit (PriS) and a large subunit (PriL). Mg(2+) is required as a cofactor. The cofactor is Mn(2+).

Catalytic subunit of DNA primase, an RNA polymerase that catalyzes the synthesis of short RNA molecules used as primers for DNA polymerase during DNA replication. The small subunit contains the primase catalytic core and has DNA synthesis activity on its own. Binding to the large subunit stabilizes and modulates the activity, increasing the rate of DNA synthesis while decreasing the length of the DNA fragments, and conferring RNA synthesis capability. The DNA polymerase activity may enable DNA primase to also catalyze primer extension after primer synthesis. May also play a role in DNA repair. The chain is DNA primase small subunit PriS from Staphylothermus marinus (strain ATCC 43588 / DSM 3639 / JCM 9404 / F1).